A 174-amino-acid chain; its full sequence is Ribosome maturation factor RimP (174 aa).

Belongs to the RimP family.

The protein localises to the cytoplasm. Its function is as follows. Required for maturation of 30S ribosomal subunits. The protein is Ribosome maturation factor RimP of Bdellovibrio bacteriovorus (strain ATCC 15356 / DSM 50701 / NCIMB 9529 / HD100).